Here is a 558-residue protein sequence, read N- to C-terminus: MPIEFVCKIKFAEGEEAKGASTEGGGTGMLDEGLRRQKEGMADLASFASSSSLHGLARALGTSERLGFRQTLWGLALLVSLGLFLYQATWSAATYLERPHLAALREETRRELTFPAITLCNVNRFRFSALTDADIYHLANLTGLPPKSRKGHRPSELQYPPPNMLDIFQRTGHQLEDMLKSCNFSGQNCSSEDFSVVYTRYGKCYTFNGNKTSPKRVRQGGTGNGLEMMLDIQQDEYLPIWRETNETTLEAGIRVQIHSQNEPPYIHQLGFGVSPGFQTFVSCQEQRLTYLPQPWGNCRASSEPVIPGYDTYSVSACRLHCESTQVQRECNCRMVHMPGDADICAPSKIKCVDKALASLQKSTGDSCPCETPCNLTRYGKELSMVKIPSRGSARYLSRKYQKSEEYIRDNFLILDIFFEALNYETIEQKKAYDIAGLLGDIGGQMGLFIGASILTILEILDYIYEVAKNKIKQLLKPKKSQKQTNQRNLIQEQIQRTKNLREQNLKAQLTAGAIATVRFEEVKVKAANDVAQPHSAHPTSVLPNHHNAQQAVQQDFAC.

The Cytoplasmic segment spans residues Met-1–Thr-71. The chain crosses the membrane as a helical span at residues Leu-72–Ala-92. Residues Ala-93–Asp-433 lie on the Extracellular side of the membrane. Cystine bridges form between Cys-120–Cys-204 and Cys-182–Cys-189. 5 N-linked (GlcNAc...) asparagine glycosylation sites follow: Asn-140, Asn-183, Asn-188, Asn-210, and Asn-245. Cystine bridges form between Cys-298–Cys-373, Cys-317–Cys-369, Cys-321–Cys-367, Cys-330–Cys-351, and Cys-332–Cys-344. Residue Asn-374 is glycosylated (N-linked (GlcNAc...) asparagine). A helical membrane pass occupies residues Ile-434 to Leu-454. The short motif at Gly-450–Ser-452 is the GAS motif; ion selectivity filter element. Over Thr-455 to Cys-558 the chain is Cytoplasmic.

It belongs to the amiloride-sensitive sodium channel (TC 1.A.6) family. ASIC4 subfamily. In terms of assembly, homotrimer. Heterotrimer; with other ASIC proteins producing functional channels. As to expression, expressed in central nervous system.

Its subcellular location is the cell membrane. It carries out the reaction Na(+)(in) = Na(+)(out). Its function is as follows. Does not exhibit measurable stand-alone pH-gated sodium channel activity but may form pH-gated heterotrimeric sodium channels. This is Acid-sensing ion channel 4-B from Danio rerio (Zebrafish).